The primary structure comprises 293 residues: Glutamyl-Q tRNA(Asp) synthetase (293 aa).

L-glutamate is bound by residues 4-8 and E40; that span reads RYAPS. A 'HIGH' region motif is present at residues 7–17; that stretch reads PSPSGDLHFGN. Positions 92, 94, 113, and 117 each coordinate Zn(2+). Residues Y180 and R198 each contribute to the L-glutamate site. Residues 236 to 240 carry the 'KMSKS' region motif; that stretch reads RLAKR. Residue K239 participates in ATP binding.

Belongs to the class-I aminoacyl-tRNA synthetase family. GluQ subfamily. Zn(2+) is required as a cofactor.

In terms of biological role, catalyzes the tRNA-independent activation of glutamate in presence of ATP and the subsequent transfer of glutamate onto a tRNA(Asp). Glutamate is transferred on the 2-amino-5-(4,5-dihydroxy-2-cyclopenten-1-yl) moiety of the queuosine in the wobble position of the QUC anticodon. This is Glutamyl-Q tRNA(Asp) synthetase from Corynebacterium glutamicum (strain ATCC 13032 / DSM 20300 / JCM 1318 / BCRC 11384 / CCUG 27702 / LMG 3730 / NBRC 12168 / NCIMB 10025 / NRRL B-2784 / 534).